Reading from the N-terminus, the 476-residue chain is Aspartyl/glutamyl-tRNA(Asn/Gln) amidotransferase subunit B (476 aa).

It belongs to the GatB/GatE family. GatB subfamily. Heterotrimer of A, B and C subunits.

It catalyses the reaction L-glutamyl-tRNA(Gln) + L-glutamine + ATP + H2O = L-glutaminyl-tRNA(Gln) + L-glutamate + ADP + phosphate + H(+). The enzyme catalyses L-aspartyl-tRNA(Asn) + L-glutamine + ATP + H2O = L-asparaginyl-tRNA(Asn) + L-glutamate + ADP + phosphate + 2 H(+). Functionally, allows the formation of correctly charged Asn-tRNA(Asn) or Gln-tRNA(Gln) through the transamidation of misacylated Asp-tRNA(Asn) or Glu-tRNA(Gln) in organisms which lack either or both of asparaginyl-tRNA or glutaminyl-tRNA synthetases. The reaction takes place in the presence of glutamine and ATP through an activated phospho-Asp-tRNA(Asn) or phospho-Glu-tRNA(Gln). The protein is Aspartyl/glutamyl-tRNA(Asn/Gln) amidotransferase subunit B of Lactobacillus gasseri (strain ATCC 33323 / DSM 20243 / BCRC 14619 / CIP 102991 / JCM 1131 / KCTC 3163 / NCIMB 11718 / NCTC 13722 / AM63).